The sequence spans 315 residues: Aspartate carbamoyltransferase catalytic subunit (315 aa).

Carbamoyl phosphate contacts are provided by R64 and T65. K92 contributes to the L-aspartate binding site. 3 residues coordinate carbamoyl phosphate: R114, H142, and Q145. The L-aspartate site is built by R175 and R229. Residues G270 and P271 each coordinate carbamoyl phosphate.

The protein belongs to the aspartate/ornithine carbamoyltransferase superfamily. ATCase family. As to quaternary structure, heterododecamer (2C3:3R2) of six catalytic PyrB chains organized as two trimers (C3), and six regulatory PyrI chains organized as three dimers (R2).

It catalyses the reaction carbamoyl phosphate + L-aspartate = N-carbamoyl-L-aspartate + phosphate + H(+). It functions in the pathway pyrimidine metabolism; UMP biosynthesis via de novo pathway; (S)-dihydroorotate from bicarbonate: step 2/3. Catalyzes the condensation of carbamoyl phosphate and aspartate to form carbamoyl aspartate and inorganic phosphate, the committed step in the de novo pyrimidine nucleotide biosynthesis pathway. This chain is Aspartate carbamoyltransferase catalytic subunit, found in Methylorubrum populi (strain ATCC BAA-705 / NCIMB 13946 / BJ001) (Methylobacterium populi).